The sequence spans 629 residues: Arginine--tRNA ligase (629 aa).

A 'HIGH' region motif is present at residues 128-138 (VNPTKPLHMGH).

It belongs to the class-I aminoacyl-tRNA synthetase family.

It localises to the cytoplasm. The catalysed reaction is tRNA(Arg) + L-arginine + ATP = L-arginyl-tRNA(Arg) + AMP + diphosphate. This Pyrococcus horikoshii (strain ATCC 700860 / DSM 12428 / JCM 9974 / NBRC 100139 / OT-3) protein is Arginine--tRNA ligase (argS).